Consider the following 388-residue polypeptide: Succinate--CoA ligase [ADP-forming] subunit beta (388 aa).

One can recognise an ATP-grasp domain in the interval 9-244; the sequence is KQLFKEFGLP…PSQDDAREAE (236 aa). ATP-binding positions include K46, 53-55, E99, T102, and E107; that span reads GRG. Residues N199 and D213 each coordinate Mg(2+). Residues N264 and 321–323 each bind substrate; that span reads GIV.

Belongs to the succinate/malate CoA ligase beta subunit family. In terms of assembly, heterotetramer of two alpha and two beta subunits. The cofactor is Mg(2+).

The catalysed reaction is succinate + ATP + CoA = succinyl-CoA + ADP + phosphate. It catalyses the reaction GTP + succinate + CoA = succinyl-CoA + GDP + phosphate. It participates in carbohydrate metabolism; tricarboxylic acid cycle; succinate from succinyl-CoA (ligase route): step 1/1. Succinyl-CoA synthetase functions in the citric acid cycle (TCA), coupling the hydrolysis of succinyl-CoA to the synthesis of either ATP or GTP and thus represents the only step of substrate-level phosphorylation in the TCA. The beta subunit provides nucleotide specificity of the enzyme and binds the substrate succinate, while the binding sites for coenzyme A and phosphate are found in the alpha subunit. This chain is Succinate--CoA ligase [ADP-forming] subunit beta, found in Idiomarina loihiensis (strain ATCC BAA-735 / DSM 15497 / L2-TR).